Here is a 144-residue protein sequence, read N- to C-terminus: Putative HTH-type transcriptional regulator aq_268 (144 aa).

Positions 2-133 constitute an HTH rrf2-type domain; that stretch reads IFSDTVRYAL…KGTTIKDLIN (132 aa).

In Aquifex aeolicus (strain VF5), this protein is Putative HTH-type transcriptional regulator aq_268.